Here is a 243-residue protein sequence, read N- to C-terminus: Uridylate kinase (243 aa).

Position 15 to 18 (15 to 18 (KLSG)) interacts with ATP. Gly56 is a UMP binding site. ATP is bound by residues Gly57 and Arg61. 138 to 145 (TGNPYFST) contacts UMP. Residues Asn166, Tyr172, and Asp175 each coordinate ATP.

This sequence belongs to the UMP kinase family. Homohexamer.

Its subcellular location is the cytoplasm. It catalyses the reaction UMP + ATP = UDP + ADP. It functions in the pathway pyrimidine metabolism; CTP biosynthesis via de novo pathway; UDP from UMP (UMPK route): step 1/1. Its activity is regulated as follows. Inhibited by UTP. Functionally, catalyzes the reversible phosphorylation of UMP to UDP. This chain is Uridylate kinase, found in Mycoplasma genitalium (strain ATCC 33530 / DSM 19775 / NCTC 10195 / G37) (Mycoplasmoides genitalium).